The following is a 212-amino-acid chain: MRFIALLISFFALLKVISAISGVDISSASTIESFTCLKSAGYDFAIIRAYESLGQVDPNGPHSVYNARDAGIEYVDVYMFPCPTCGNGAGQAETMVNYLKGYNANYGMVWLDIEGPQYWMSQSENVAFFESLVAGLKAEGAHIGVYTSASQWEPIMGGYTGGSEFPLWYAHYDGNPSFSDFSPFNGWSTPSVKQYDDTGDSCGLGFDLNWYP.

An N-terminal signal peptide occupies residues 1 to 19 (MRFIALLISFFALLKVISA). Residues 20–212 (ISGVDISSAS…GLGFDLNWYP (193 aa)) form the Ch-type lysozyme domain. Catalysis depends on residues D24, D112, and E114.

It belongs to the glycosyl hydrolase 25 family.

The protein resides in the secreted. It catalyses the reaction Hydrolysis of (1-&gt;4)-beta-linkages between N-acetylmuramic acid and N-acetyl-D-glucosamine residues in a peptidoglycan and between N-acetyl-D-glucosamine residues in chitodextrins.. The protein is Probable GH family 25 lysozyme 2 of Dictyostelium discoideum (Social amoeba).